We begin with the raw amino-acid sequence, 607 residues long: Elongation factor 4 (607 aa).

Positions 11–193 (SKIRNFSIIA…QIVEKVPAPA (183 aa)) constitute a tr-type G domain. GTP-binding positions include 23-28 (DHGKST) and 140-143 (NKID).

This sequence belongs to the TRAFAC class translation factor GTPase superfamily. Classic translation factor GTPase family. LepA subfamily.

It localises to the cell membrane. It carries out the reaction GTP + H2O = GDP + phosphate + H(+). Its function is as follows. Required for accurate and efficient protein synthesis under certain stress conditions. May act as a fidelity factor of the translation reaction, by catalyzing a one-codon backward translocation of tRNAs on improperly translocated ribosomes. Back-translocation proceeds from a post-translocation (POST) complex to a pre-translocation (PRE) complex, thus giving elongation factor G a second chance to translocate the tRNAs correctly. Binds to ribosomes in a GTP-dependent manner. The chain is Elongation factor 4 from Bacillus cereus (strain B4264).